Consider the following 407-residue polypeptide: Putative colanic acid biosynthesis glycosyl transferase WcaI (407 aa).

Its pathway is slime biogenesis; slime polysaccharide biosynthesis. This chain is Putative colanic acid biosynthesis glycosyl transferase WcaI (wcaI), found in Escherichia coli (strain K12).